The chain runs to 124 residues: Large ribosomal subunit protein bL12 (124 aa).

Belongs to the bacterial ribosomal protein bL12 family. In terms of assembly, homodimer. Part of the ribosomal stalk of the 50S ribosomal subunit. Forms a multimeric L10(L12)X complex, where L10 forms an elongated spine to which 2 to 4 L12 dimers bind in a sequential fashion. Binds GTP-bound translation factors.

In terms of biological role, forms part of the ribosomal stalk which helps the ribosome interact with GTP-bound translation factors. Is thus essential for accurate translation. The sequence is that of Large ribosomal subunit protein bL12 from Azobacteroides pseudotrichonymphae genomovar. CFP2.